Reading from the N-terminus, the 397-residue chain is Phosphoglycerate kinase (397 aa).

Substrate-binding positions include 21 to 23 (DFN), R37, 60 to 63 (HLGR), R119, and R152. ATP contacts are provided by residues K203, G294, E325, and 354 to 357 (GGDS).

It belongs to the phosphoglycerate kinase family. In terms of assembly, monomer.

Its subcellular location is the cytoplasm. The catalysed reaction is (2R)-3-phosphoglycerate + ATP = (2R)-3-phospho-glyceroyl phosphate + ADP. Its pathway is carbohydrate degradation; glycolysis; pyruvate from D-glyceraldehyde 3-phosphate: step 2/5. The polypeptide is Phosphoglycerate kinase (Chlorobaculum tepidum (strain ATCC 49652 / DSM 12025 / NBRC 103806 / TLS) (Chlorobium tepidum)).